We begin with the raw amino-acid sequence, 417 residues long: Candidapepsin-4 (417 aa).

Positions 1-18 are cleaved as a signal peptide; the sequence is MFLQNILSVLAFALLIDA. The propeptide at 19 to 75 is activation peptide; it reads APVKRSTGFVTLDFNVKRSLVDPKDPTVEVKRSPLFLDIEPTEIPVDDTGRNDVGKR. Residues 89–403 form the Peptidase A1 domain; the sequence is YSADITIGSN…DLDDRKISMA (315 aa). Residue aspartate 107 is part of the active site. A disulfide bridge links cysteine 122 with cysteine 134. Asparagine 137 carries N-linked (GlcNAc...) asparagine glycosylation. The active site involves aspartate 293. A disulfide bond links cysteine 331 and cysteine 369.

This sequence belongs to the peptidase A1 family. In terms of processing, O-glycosylated.

It localises to the secreted. The enzyme catalyses Preferential cleavage at the carboxyl of hydrophobic amino acids, but fails to cleave 15-Leu-|-Tyr-16, 16-Tyr-|-Leu-17 and 24-Phe-|-Phe-25 of insulin B chain. Activates trypsinogen, and degrades keratin.. The sequence is that of Candidapepsin-4 (SAP4) from Candida albicans (strain WO-1) (Yeast).